The chain runs to 241 residues: Phosphoribosylaminoimidazole-succinocarboxamide synthase (241 aa).

It belongs to the SAICAR synthetase family.

It catalyses the reaction 5-amino-1-(5-phospho-D-ribosyl)imidazole-4-carboxylate + L-aspartate + ATP = (2S)-2-[5-amino-1-(5-phospho-beta-D-ribosyl)imidazole-4-carboxamido]succinate + ADP + phosphate + 2 H(+). Its pathway is purine metabolism; IMP biosynthesis via de novo pathway; 5-amino-1-(5-phospho-D-ribosyl)imidazole-4-carboxamide from 5-amino-1-(5-phospho-D-ribosyl)imidazole-4-carboxylate: step 1/2. The sequence is that of Phosphoribosylaminoimidazole-succinocarboxamide synthase from Lacticaseibacillus paracasei (strain ATCC 334 / BCRC 17002 / CCUG 31169 / CIP 107868 / KCTC 3260 / NRRL B-441) (Lactobacillus paracasei).